The sequence spans 447 residues: Cysteine--tRNA ligase (447 aa).

Residue Cys-28 participates in Zn(2+) binding. The 'HIGH' region motif lies at Pro-30 to Asn-40. Zn(2+) contacts are provided by Cys-211, His-236, and Glu-240. Residues Lys-268–Ser-272 carry the 'KMSKS' region motif. Residue Lys-271 coordinates ATP.

This sequence belongs to the class-I aminoacyl-tRNA synthetase family. As to quaternary structure, monomer. Zn(2+) serves as cofactor.

It is found in the cytoplasm. It catalyses the reaction tRNA(Cys) + L-cysteine + ATP = L-cysteinyl-tRNA(Cys) + AMP + diphosphate. This chain is Cysteine--tRNA ligase, found in Streptococcus pyogenes serotype M18 (strain MGAS8232).